The sequence spans 253 residues: Ubiquinone/menaquinone biosynthesis C-methyltransferase UbiE (253 aa).

Residues T76, D97, and N125–A126 contribute to the S-adenosyl-L-methionine site.

Belongs to the class I-like SAM-binding methyltransferase superfamily. MenG/UbiE family.

It carries out the reaction a 2-demethylmenaquinol + S-adenosyl-L-methionine = a menaquinol + S-adenosyl-L-homocysteine + H(+). The catalysed reaction is a 2-methoxy-6-(all-trans-polyprenyl)benzene-1,4-diol + S-adenosyl-L-methionine = a 5-methoxy-2-methyl-3-(all-trans-polyprenyl)benzene-1,4-diol + S-adenosyl-L-homocysteine + H(+). It functions in the pathway quinol/quinone metabolism; menaquinone biosynthesis; menaquinol from 1,4-dihydroxy-2-naphthoate: step 2/2. Its pathway is cofactor biosynthesis; ubiquinone biosynthesis. In terms of biological role, methyltransferase required for the conversion of demethylmenaquinol (DMKH2) to menaquinol (MKH2) and the conversion of 2-polyprenyl-6-methoxy-1,4-benzoquinol (DDMQH2) to 2-polyprenyl-3-methyl-6-methoxy-1,4-benzoquinol (DMQH2). The protein is Ubiquinone/menaquinone biosynthesis C-methyltransferase UbiE of Bradyrhizobium diazoefficiens (strain JCM 10833 / BCRC 13528 / IAM 13628 / NBRC 14792 / USDA 110).